A 130-amino-acid chain; its full sequence is uncharacterized protein (130 aa).

This is an uncharacterized protein from Enterobacteria phage T4 (Bacteriophage T4).